Consider the following 362-residue polypeptide: Methylthioribose-1-phosphate isomerase (362 aa).

Substrate-binding positions include 49–51 (RGA), Arg-89, and Gln-201. Asp-242 functions as the Proton donor in the catalytic mechanism. Residue 252 to 253 (NK) participates in substrate binding.

It belongs to the eIF-2B alpha/beta/delta subunits family. MtnA subfamily.

The catalysed reaction is 5-(methylsulfanyl)-alpha-D-ribose 1-phosphate = 5-(methylsulfanyl)-D-ribulose 1-phosphate. It functions in the pathway amino-acid biosynthesis; L-methionine biosynthesis via salvage pathway; L-methionine from S-methyl-5-thio-alpha-D-ribose 1-phosphate: step 1/6. Catalyzes the interconversion of methylthioribose-1-phosphate (MTR-1-P) into methylthioribulose-1-phosphate (MTRu-1-P). The polypeptide is Methylthioribose-1-phosphate isomerase (Leptospira borgpetersenii serovar Hardjo-bovis (strain JB197)).